Consider the following 705-residue polypeptide: Elongation factor G (705 aa).

One can recognise a tr-type G domain in the interval 8 to 291; it reads EKVRNIGIMA…AVVEYLPSPI (284 aa). GTP-binding positions include 17 to 24, 90 to 94, and 144 to 147; these read AHIDAGKT, DTPGH, and NKMD.

This sequence belongs to the TRAFAC class translation factor GTPase superfamily. Classic translation factor GTPase family. EF-G/EF-2 subfamily.

The protein localises to the cytoplasm. In terms of biological role, catalyzes the GTP-dependent ribosomal translocation step during translation elongation. During this step, the ribosome changes from the pre-translocational (PRE) to the post-translocational (POST) state as the newly formed A-site-bound peptidyl-tRNA and P-site-bound deacylated tRNA move to the P and E sites, respectively. Catalyzes the coordinated movement of the two tRNA molecules, the mRNA and conformational changes in the ribosome. The chain is Elongation factor G from Chloroherpeton thalassium (strain ATCC 35110 / GB-78).